The sequence spans 512 residues: ATP synthase subunit alpha 2 (512 aa).

ATP is bound at residue 169–176 (GDRQTGKT).

The protein belongs to the ATPase alpha/beta chains family. As to quaternary structure, F-type ATPases have 2 components, CF(1) - the catalytic core - and CF(0) - the membrane proton channel. CF(1) has five subunits: alpha(3), beta(3), gamma(1), delta(1), epsilon(1). CF(0) has four main subunits: a(1), b(1), b'(1) and c(9-12).

Its subcellular location is the cell inner membrane. The enzyme catalyses ATP + H2O + 4 H(+)(in) = ADP + phosphate + 5 H(+)(out). Produces ATP from ADP in the presence of a proton gradient across the membrane. The alpha chain is a regulatory subunit. The protein is ATP synthase subunit alpha 2 of Dinoroseobacter shibae (strain DSM 16493 / NCIMB 14021 / DFL 12).